A 383-amino-acid chain; its full sequence is Acetylornithine deacetylase (383 aa).

Zn(2+) is bound at residue H80. D82 is a catalytic residue. Residue D112 participates in Zn(2+) binding. E144 is a catalytic residue. Zn(2+) is bound by residues E145, E169, and H355.

The protein belongs to the peptidase M20A family. ArgE subfamily. In terms of assembly, homodimer. It depends on Zn(2+) as a cofactor. Co(2+) is required as a cofactor. Requires glutathione as cofactor.

It localises to the cytoplasm. The enzyme catalyses N(2)-acetyl-L-ornithine + H2O = L-ornithine + acetate. It functions in the pathway amino-acid biosynthesis; L-arginine biosynthesis; L-ornithine from N(2)-acetyl-L-ornithine (linear): step 1/1. Functionally, catalyzes the hydrolysis of the amide bond of N(2)-acetylated L-amino acids. Cleaves the acetyl group from N-acetyl-L-ornithine to form L-ornithine, an intermediate in L-arginine biosynthesis pathway, and a branchpoint in the synthesis of polyamines. The protein is Acetylornithine deacetylase of Edwardsiella ictaluri (strain 93-146).